A 144-amino-acid chain; its full sequence is AP-4 complex subunit sigma-1 (144 aa).

The protein belongs to the adaptor complexes small subunit family. In terms of assembly, adaptor protein complex 4 (AP-4) is a heterotetramer composed of two large adaptins (epsilon-type subunit AP4E1 and beta-type subunit AP4B1), a medium adaptin (mu-type subunit AP4M1) and a small adaptin (sigma-type AP4S1).

The protein resides in the golgi apparatus. It localises to the trans-Golgi network membrane. Component of the adaptor protein complex 4 (AP-4). Adaptor protein complexes are vesicle coat components involved both in vesicle formation and cargo selection. They control the vesicular transport of proteins in different trafficking pathways. AP-4 forms a non clathrin-associated coat on vesicles departing the trans-Golgi network (TGN) and may be involved in the targeting of proteins from the trans-Golgi network (TGN) to the endosomal-lysosomal system. It is also involved in protein sorting to the basolateral membrane in epithelial cells and the proper asymmetric localization of somatodendritic proteins in neurons. AP-4 is involved in the recognition and binding of tyrosine-based sorting signals found in the cytoplasmic part of cargos, but may also recognize other types of sorting signal. This is AP-4 complex subunit sigma-1 from Mus musculus (Mouse).